Reading from the N-terminus, the 196-residue chain is Probable GTP-binding protein EngB (196 aa).

The region spanning K22–V195 is the EngB-type G domain. GTP-binding positions include G30–S37, G57–T61, D75–G78, T142–D145, and F174–A176. 2 residues coordinate Mg(2+): S37 and T59.

The protein belongs to the TRAFAC class TrmE-Era-EngA-EngB-Septin-like GTPase superfamily. EngB GTPase family. The cofactor is Mg(2+).

Necessary for normal cell division and for the maintenance of normal septation. The chain is Probable GTP-binding protein EngB from Ligilactobacillus salivarius (strain UCC118) (Lactobacillus salivarius).